Reading from the N-terminus, the 469-residue chain is 3-isopropylmalate dehydratase large subunit (469 aa).

3 residues coordinate [4Fe-4S] cluster: Cys349, Cys409, and Cys412.

It belongs to the aconitase/IPM isomerase family. LeuC type 1 subfamily. Heterodimer of LeuC and LeuD. Requires [4Fe-4S] cluster as cofactor.

It carries out the reaction (2R,3S)-3-isopropylmalate = (2S)-2-isopropylmalate. The protein operates within amino-acid biosynthesis; L-leucine biosynthesis; L-leucine from 3-methyl-2-oxobutanoate: step 2/4. Functionally, catalyzes the isomerization between 2-isopropylmalate and 3-isopropylmalate, via the formation of 2-isopropylmaleate. The polypeptide is 3-isopropylmalate dehydratase large subunit (Methylorubrum populi (strain ATCC BAA-705 / NCIMB 13946 / BJ001) (Methylobacterium populi)).